A 314-amino-acid polypeptide reads, in one-letter code: Acetylglutamate kinase (314 aa).

Substrate-binding positions include 76-77 (GG), Arg-98, and Asn-199.

This sequence belongs to the acetylglutamate kinase family. ArgB subfamily.

Its subcellular location is the cytoplasm. It carries out the reaction N-acetyl-L-glutamate + ATP = N-acetyl-L-glutamyl 5-phosphate + ADP. It functions in the pathway amino-acid biosynthesis; L-arginine biosynthesis; N(2)-acetyl-L-ornithine from L-glutamate: step 2/4. Catalyzes the ATP-dependent phosphorylation of N-acetyl-L-glutamate. The chain is Acetylglutamate kinase from Bifidobacterium longum (strain DJO10A).